We begin with the raw amino-acid sequence, 650 residues long: Epithelial sodium channel subunit gamma (650 aa).

Topologically, residues 1–55 are cytoplasmic; it reads MAPGEKIKAKIKKNLPVRGPQAPTIKDLMHWYCMNTNTHGCRRIVVSRGRLRRLL. A helical membrane pass occupies residues 56–76; that stretch reads WIAFTLTAVALIIWQCALLVF. Over 77-542 the chain is Extracellular; sequence SFYTVSVSIK…GGQLGLWMSC (466 aa). 8 disulfides stabilise this stretch: Cys100/Cys284, Cys208/Cys215, Cys261/Cys268, Cys373/Cys458, Cys395/Cys454, Cys399/Cys450, Cys408/Cys435, and Cys410/Cys424. A gating release of inhibition by proteolysis (GRIP); protease-sensitive region that is responsible for the proteolytic activation of the channel region spans residues 135–222; it reads RKRREAGSMP…SDCATYTFSS (88 aa). Asn210 is a glycosylation site (N-linked (GlcNAc...) asparagine). The N-linked (GlcNAc...) asparagine glycan is linked to Asn272. N-linked (GlcNAc...) asparagine glycosylation occurs at Asn498. Residues 543–563 form a helical membrane-spanning segment; it reads SVVCVIEIIEVFFIDFFSIIA. The Cytoplasmic segment spans residues 564–650; sequence RRQWHKAKDW…LTDTQLTNEL (87 aa). The segment at 577–628 is disordered; sequence RQTPPSTETPSSRQGQDNPALDTDDDLPTFTSAMRLPPAPGSTVPGTPPPRY. A compositionally biased stretch (polar residues) spans 579 to 593; that stretch reads TPPSTETPSSRQGQD. Residues 624–628 carry the PY motif; mediates interaction, ubiquitination and inhibition by NEDD4 and NEDD4L motif; sequence PPPRY. The PY motif; recruits WW domain-containing proteins and is thereby required for ubiquitination and inhibition of the channel by NEDD4 and NEDD4L motif lies at 624–628; the sequence is PPPRY.

The protein belongs to the amiloride-sensitive sodium channel (TC 1.A.6) family. SCNN1G subfamily. In terms of assembly, component of the heterotrimeric epithelial sodium channel (ENaC) composed of an alpha/SCNN1A, a beta/SCNN1B and a gamma/SCNN1G subunit. Interacts with WWP1 (via WW domains). Interacts with WWP2 (via WW domains); inhibits the channel. Interacts with the full-length immature form of PCSK9 (pro-PCSK9); inhibits ENaC by promoting its proteasomal degradation. Interacts with BPIFA1; the interaction is indirect via SCNN1B and inhibits the proteolytic maturation of SCNN1A and SCNN1G and the activation of ENaC. Post-translationally, phosphorylated on serine and threonine residues. Aldosterone and insulin increase the basal level of phosphorylation. In terms of processing, ubiquitinated. Can be ubiquitinated at multiple sites and undergo monoubiquitination and polyubiquitination. Ubiquitination by NEDD4 or NEDD4L inhibits the ENaC channel through endocytosis, intracellular retention and degradation of its individual subunits. ENaC is activated through the proteolytic maturation of its subunits. Furin cleaves the SCNN1G subunit first, followed by cleavage by prostasin (PRSS8), which results in a stepwise increase in the open probability of the channel due to the release of an inhibitory tract. BPIFA1, which is recruited by the SCNN1B subunit, prevents the proteolytic activation of ENaC. Post-translationally, N-glycosylated. N-linked glycans are processed to complex type during ENaC complex assembly and transport to the plasma membrane.

It localises to the apical cell membrane. It catalyses the reaction Na(+)(in) = Na(+)(out). Originally identified and characterized by its inhibition by the diuretic drug amiloride. This is one of the three pore-forming subunits of the heterotrimeric epithelial sodium channel (ENaC), a critical regulator of sodium balance and fluid homeostasis. ENaC operates in epithelial tissues, where it mediates the electrodiffusion of sodium ions from extracellular fluid through the apical membrane of cells, with water following osmotically. It plays a key role in maintaining sodium homeostasis through electrogenic sodium reabsorption in the kidneys. Additionally, ENaC is essential for airway surface liquid homeostasis, which is crucial for proper mucus clearance. In Rattus norvegicus (Rat), this protein is Epithelial sodium channel subunit gamma.